A 460-amino-acid chain; its full sequence is 3'3'-cGAMP-specific phosphodiesterase 3 (460 aa).

Residues 28–189 (PPEHCIRCCW…IPLFSRIALL (162 aa)) form the HD domain. Positions 260–455 (DDAYLECIVT…LPDEYTQLPH (196 aa)) constitute an HD-GYP domain. His-317 and Asp-318 together coordinate a divalent metal cation. Lys-321 functions as the Proton donor in the catalytic mechanism. A divalent metal cation is bound by residues His-346, His-370, His-371, and Asp-399.

As to quaternary structure, monomer. The cofactor is Mn(2+).

It catalyses the reaction 3',3'-cGAMP + H2O = 5'-pApG-3' + H(+). In terms of biological role, phosphodiesterase (PDE) that catalyzes the hydrolysis of 3'3'-cyclic GMP-AMP (3'3'-cGAMP), leading to linear 5'-pApG. Counteracts the function of the 3'3'-cGAMP synthase DncV, and is involved in the modulation of intracellular 3'3'-cGAMP levels. Enhances bacterial chemotaxis and inhibits intestinal colonization in vivo. Thus exerts a crucial role in regulating bacterial infectivity through catalyzing 3'3'-cGAMP degradation. Is specific for 3'3'-cGAMP since it cannot degrade other cGAMP linkage isomers (3'2'-, 2'3'-, and 2'2'-cGAMPs); is also able to hydrolyze c-di-GMP but not c-di-AMP. The polypeptide is 3'3'-cGAMP-specific phosphodiesterase 3 (Vibrio cholerae serotype O1 (strain ATCC 39315 / El Tor Inaba N16961)).